A 365-amino-acid polypeptide reads, in one-letter code: Aminomethyltransferase (365 aa).

This sequence belongs to the GcvT family. As to quaternary structure, the glycine cleavage system is composed of four proteins: P, T, L and H.

It carries out the reaction N(6)-[(R)-S(8)-aminomethyldihydrolipoyl]-L-lysyl-[protein] + (6S)-5,6,7,8-tetrahydrofolate = N(6)-[(R)-dihydrolipoyl]-L-lysyl-[protein] + (6R)-5,10-methylene-5,6,7,8-tetrahydrofolate + NH4(+). Functionally, the glycine cleavage system catalyzes the degradation of glycine. The polypeptide is Aminomethyltransferase (Natranaerobius thermophilus (strain ATCC BAA-1301 / DSM 18059 / JW/NM-WN-LF)).